The chain runs to 869 residues: Synaptonemal complex protein ZEP1 (869 aa).

Coiled-coil stretches lie at residues 64–298 (TDLE…SGFT), 330–614 (HEEK…SERY), and 641–713 (RAYH…WKVM). The segment at 841-869 (GSHPHPANIGELFSEGSLNPYAEDPYAFG) is disordered.

In terms of assembly, interacts with CRC1. As to expression, highly expressed in panicles.

It localises to the nucleus. The protein resides in the chromosome. Its function is as follows. Required for chromosome synapsis and regulates crossover frequency during meiosis. Acts as a transverse filament protein and constitutes the central element of the synaptonemal complex. This Oryza sativa subsp. japonica (Rice) protein is Synaptonemal complex protein ZEP1 (ZEP1).